Reading from the N-terminus, the 187-residue chain is NADPH-dependent 3-demethoxyubiquinone 3-hydroxylase, mitochondrial (187 aa).

Residues 1–8 (MFRVITRG) constitute a mitochondrion transit peptide. Position 21 (Lys-21) interacts with NADH. A run of 2 repeats spans residues 28–99 (AGEL…SALL) and 100–187 (GKEG…AEKI). Positions 28–187 (AGELGADRIY…KGAIAIAEKI (160 aa)) are 2 X approximate tandem repeats. Glu-30, Glu-60, His-63, Glu-112, Glu-148, and His-151 together coordinate Fe cation. Lys-186 is a binding site for NADH.

This sequence belongs to the COQ7 family. Component of a multi-subunit COQ enzyme complex. Fe cation serves as cofactor.

It is found in the mitochondrion inner membrane. The protein localises to the mitochondrion. It localises to the nucleus. It catalyses the reaction a 5-methoxy-2-methyl-3-(all-trans-polyprenyl)benzoquinone + NADH + O2 = a 3-demethylubiquinone + NAD(+) + H2O. It participates in cofactor biosynthesis; ubiquinone biosynthesis. Functionally, catalyzes the hydroxylation of the 5-methoxy-2-methyl-3-(all-trans-polyprenyl)benzoquinone at the C6 position and participates in the biosynthesis of ubiquinone. Catalyzes the reaction through a substrate-mediated reduction pathway, whereby NADH shuttles electrons to 5-methoxy-2-methyl-3-(all-trans-decaprenyl)benzoquinone, which then transfers the electrons to the two Fe(3+) centers. The binding of 5-methoxy-2-methyl-3-(all-trans-polyprenyl)benzoquinone (DMQn) mediates reduction of the diiron center by nicotinamide adenine dinucleotide (NADH) and initiates oxygen activation for subsequent DMQ hydroxylation. Also has a structural role in the COQ enzyme complex, stabilizing other COQ polypeptides. Involved in lifespan determination in a ubiquinone-independent manner. Plays a role in modulating mitochondrial stress responses, acting in the nucleus, perhaps via regulating gene expression, independent of its characterized mitochondrial function in ubiquinone biosynthesis. Plays a role in modulating polyribosome formation. The chain is NADPH-dependent 3-demethoxyubiquinone 3-hydroxylase, mitochondrial from Caenorhabditis elegans.